A 338-amino-acid chain; its full sequence is MKVFYDKDCDLSLIKGKTVAIIGYGSQGHAHAQNLNDSGVKVVVGLRKGGASWTKVEKAGLKVAEVADAVKAADVVMILLPDEHIAAVYTEDIEPNIKQGASLVFAHGFNVHYGLVTPRADLDVWMVAPKAPGHTVRGTYVQGGGVPQLIAIHQDKSGRTRDLALSYAMANGGGKAGIIETTFREETETDLFGEQAVLCGGTVELIKAGFETLVEAGYAPEMAYFECLHELKLIVDMIYEGGIANMNYSISNNAEYGEYVTGPKIITSASKDAMRQCLKDIQTGEYAKSFILENKAGAPTLLSRRRLTSEHQIEQVGEKLRAMMPWIKKNKLVDQTRN.

A KARI N-terminal Rossmann domain is found at 1-181; the sequence is MKVFYDKDCD…GGGKAGIIET (181 aa). Residues 24–27, R47, and S52 contribute to the NADP(+) site; that span reads YGSQ. Residue H107 is part of the active site. G133 is an NADP(+) binding site. In terms of domain architecture, KARI C-terminal knotted spans 182-327; sequence TFREETETDL…EKLRAMMPWI (146 aa). Mg(2+)-binding residues include D190, E194, E226, and E230. S251 contributes to the substrate binding site.

The protein belongs to the ketol-acid reductoisomerase family. It depends on Mg(2+) as a cofactor.

The enzyme catalyses (2R)-2,3-dihydroxy-3-methylbutanoate + NADP(+) = (2S)-2-acetolactate + NADPH + H(+). The catalysed reaction is (2R,3R)-2,3-dihydroxy-3-methylpentanoate + NADP(+) = (S)-2-ethyl-2-hydroxy-3-oxobutanoate + NADPH + H(+). The protein operates within amino-acid biosynthesis; L-isoleucine biosynthesis; L-isoleucine from 2-oxobutanoate: step 2/4. Its pathway is amino-acid biosynthesis; L-valine biosynthesis; L-valine from pyruvate: step 2/4. In terms of biological role, involved in the biosynthesis of branched-chain amino acids (BCAA). Catalyzes an alkyl-migration followed by a ketol-acid reduction of (S)-2-acetolactate (S2AL) to yield (R)-2,3-dihydroxy-isovalerate. In the isomerase reaction, S2AL is rearranged via a Mg-dependent methyl migration to produce 3-hydroxy-3-methyl-2-ketobutyrate (HMKB). In the reductase reaction, this 2-ketoacid undergoes a metal-dependent reduction by NADPH to yield (R)-2,3-dihydroxy-isovalerate. This is Ketol-acid reductoisomerase (NADP(+)) from Albidiferax ferrireducens (strain ATCC BAA-621 / DSM 15236 / T118) (Rhodoferax ferrireducens).